The following is a 475-amino-acid chain: Methylenetetrahydrofolate--tRNA-(uracil-5-)-methyltransferase TrmFO (475 aa).

Residue 9 to 14 coordinates FAD; the sequence is GGGLAG. The segment at 427-447 is disordered; the sequence is APRNETGRRLRGPEKAALKKR.

It belongs to the MnmG family. TrmFO subfamily. FAD serves as cofactor.

The protein localises to the cytoplasm. It catalyses the reaction uridine(54) in tRNA + (6R)-5,10-methylene-5,6,7,8-tetrahydrofolate + NADH + H(+) = 5-methyluridine(54) in tRNA + (6S)-5,6,7,8-tetrahydrofolate + NAD(+). The catalysed reaction is uridine(54) in tRNA + (6R)-5,10-methylene-5,6,7,8-tetrahydrofolate + NADPH + H(+) = 5-methyluridine(54) in tRNA + (6S)-5,6,7,8-tetrahydrofolate + NADP(+). In terms of biological role, catalyzes the folate-dependent formation of 5-methyl-uridine at position 54 (M-5-U54) in all tRNAs. This chain is Methylenetetrahydrofolate--tRNA-(uracil-5-)-methyltransferase TrmFO, found in Methylobacterium radiotolerans (strain ATCC 27329 / DSM 1819 / JCM 2831 / NBRC 15690 / NCIMB 10815 / 0-1).